Here is a 95-residue protein sequence, read N- to C-terminus: Small ribosomal subunit protein bS6 (95 aa).

It belongs to the bacterial ribosomal protein bS6 family.

Functionally, binds together with bS18 to 16S ribosomal RNA. The protein is Small ribosomal subunit protein bS6 of Shouchella clausii (strain KSM-K16) (Alkalihalobacillus clausii).